A 128-amino-acid chain; its full sequence is Mediator of RNA polymerase II transcription subunit 31-A (128 aa).

The protein belongs to the Mediator complex subunit 31 family. As to quaternary structure, component of the Mediator complex.

It is found in the nucleus. Component of the Mediator complex, a coactivator involved in the regulated transcription of nearly all RNA polymerase II-dependent genes. Mediator functions as a bridge to convey information from gene-specific regulatory proteins to the basal RNA polymerase II transcription machinery. Mediator is recruited to promoters by direct interactions with regulatory proteins and serves as a scaffold for the assembly of a functional preinitiation complex with RNA polymerase II and the general transcription factors. This Xenopus laevis (African clawed frog) protein is Mediator of RNA polymerase II transcription subunit 31-A (med31-a).